Here is a 240-residue protein sequence, read N- to C-terminus: Putative N-acetylmannosamine-6-phosphate 2-epimerase (240 aa).

It belongs to the NanE family.

It carries out the reaction an N-acyl-D-glucosamine 6-phosphate = an N-acyl-D-mannosamine 6-phosphate. It participates in amino-sugar metabolism; N-acetylneuraminate degradation; D-fructose 6-phosphate from N-acetylneuraminate: step 3/5. In terms of biological role, converts N-acetylmannosamine-6-phosphate (ManNAc-6-P) to N-acetylglucosamine-6-phosphate (GlcNAc-6-P). The chain is Putative N-acetylmannosamine-6-phosphate 2-epimerase from Vibrio cholerae serotype O1 (strain ATCC 39315 / El Tor Inaba N16961).